A 506-amino-acid polypeptide reads, in one-letter code: Maturase K (506 aa).

It belongs to the intron maturase 2 family. MatK subfamily.

It localises to the plastid. Its subcellular location is the chloroplast. Usually encoded in the trnK tRNA gene intron. Probably assists in splicing its own and other chloroplast group II introns. This chain is Maturase K, found in Calluna vulgaris (Heather).